The sequence spans 429 residues: Enolase (429 aa).

Gln-166 is a (2R)-2-phosphoglycerate binding site. Glu-208 acts as the Proton donor in catalysis. Mg(2+)-binding residues include Asp-245, Glu-289, and Asp-316. 4 residues coordinate (2R)-2-phosphoglycerate: Lys-341, Arg-370, Ser-371, and Lys-392. The active-site Proton acceptor is Lys-341.

Belongs to the enolase family. In terms of assembly, component of the RNA degradosome, a multiprotein complex involved in RNA processing and mRNA degradation. Mg(2+) is required as a cofactor.

It is found in the cytoplasm. Its subcellular location is the secreted. The protein localises to the cell surface. It carries out the reaction (2R)-2-phosphoglycerate = phosphoenolpyruvate + H2O. The protein operates within carbohydrate degradation; glycolysis; pyruvate from D-glyceraldehyde 3-phosphate: step 4/5. Functionally, catalyzes the reversible conversion of 2-phosphoglycerate (2-PG) into phosphoenolpyruvate (PEP). It is essential for the degradation of carbohydrates via glycolysis. This is Enolase from Acinetobacter baumannii (strain AB307-0294).